Consider the following 485-residue polypeptide: Glycinin G2 (485 aa).

An N-terminal signal peptide occupies residues 1-18 (MAKLVLSLCFLLFSGCFA). 2 disulfides stabilise this stretch: cysteine 28–cysteine 61 and cysteine 104–cysteine 307. In terms of domain architecture, Cupin type-1 1 spans 33-238 (LNALKPDNRI…AFGVNMQIVR (206 aa)). Residues 108-118 (YQEPQESQQRG) are compositionally biased toward polar residues. 3 disordered regions span residues 108-130 (YQEP…HQKV), 192-215 (YQQQ…NEGS), and 262-298 (TAPA…SKRS). Positions 192–205 (YQQQQQGGSQSQKG) are enriched in low complexity. The span at 272–281 (EEDDDDEEEQ) shows a compositional bias: acidic residues. The propeptide occupies 297-300 (RSRN). A Cupin type-1 2 domain is found at 313 to 462 (QNIGQNSSPD…TFNLKSQQAR (150 aa)). The Vacuolar targeting signal signature appears at 476–485 (PQESQRRAVA). Residues 481–485 (RRAVA) constitute a propeptide that is removed on maturation.

Belongs to the 11S seed storage protein (globulins) family. Hexamer; each subunit is composed of an acidic and a basic chain derived from a single precursor and linked by a disulfide bond. In terms of processing, during soybean germination, seed storage proteins are hydrolyzed by protease/26S proteasome. In terms of tissue distribution, exclusively in seeds during embryogenesis.

It is found in the endoplasmic reticulum. Its subcellular location is the protein storage vacuole. Functionally, glycinin is the major seed storage protein of soybean. Glycinin basic peptides (GBPs), and, to a lower extent, glycinin exhibit antibacterial activity against Gram-negative and Gram-positive bacteria (e.g. L.monocytogenes, B.subtilis, E.coli and S.enteritidis) by forming pores and aggregating in transmembranes, leading to membrane permeability and, eventually, cell death. The chain is Glycinin G2 from Glycine max (Soybean).